A 117-amino-acid polypeptide reads, in one-letter code: Ubiquitin-like protein 3 (117 aa).

One can recognise a Ubiquitin-like domain in the interval 10 to 88 (INLRLILVSG…PFGKTTVMHL (79 aa)). Residue C113 is the site of S-palmitoyl cysteine attachment. C114 carries the cysteine methyl ester modification. A lipid anchor (S-geranylgeranyl cysteine) is attached at C114. The propeptide at 115 to 117 (VIL) is removed in mature form.

It localises to the cell membrane. In Bos taurus (Bovine), this protein is Ubiquitin-like protein 3 (UBL3).